We begin with the raw amino-acid sequence, 256 residues long: NH(3)-dependent NAD(+) synthetase (256 aa).

Residue 29 to 36 participates in ATP binding; it reads GISGGIDS. Residue aspartate 35 coordinates Mg(2+). Position 115 (arginine 115) interacts with deamido-NAD(+). Threonine 135 lines the ATP pocket. Mg(2+) is bound at residue glutamate 140. Residues lysine 148 and aspartate 155 each coordinate deamido-NAD(+). ATP-binding residues include lysine 164 and serine 186. Residue 245–246 coordinates deamido-NAD(+); that stretch reads HK.

The protein belongs to the NAD synthetase family. In terms of assembly, homodimer.

The catalysed reaction is deamido-NAD(+) + NH4(+) + ATP = AMP + diphosphate + NAD(+) + H(+). Its pathway is cofactor biosynthesis; NAD(+) biosynthesis; NAD(+) from deamido-NAD(+) (ammonia route): step 1/1. In terms of biological role, catalyzes the ATP-dependent amidation of deamido-NAD to form NAD. Uses ammonia as a nitrogen source. The chain is NH(3)-dependent NAD(+) synthetase from Methanosarcina acetivorans (strain ATCC 35395 / DSM 2834 / JCM 12185 / C2A).